Reading from the N-terminus, the 286-residue chain is Phosphate import ATP-binding protein PstB (286 aa).

Residues 40 to 281 (VVARDFSIYY…PKDSMTEDYI (242 aa)) enclose the ABC transporter domain. Residue 72–79 (GPSGCGKS) coordinates ATP.

This sequence belongs to the ABC transporter superfamily. Phosphate importer (TC 3.A.1.7) family. As to quaternary structure, the complex is composed of two ATP-binding proteins (PstB), two transmembrane proteins (PstC and PstA) and a solute-binding protein (PstS).

Its subcellular location is the cell inner membrane. The catalysed reaction is phosphate(out) + ATP + H2O = ADP + 2 phosphate(in) + H(+). Its function is as follows. Part of the ABC transporter complex PstSACB involved in phosphate import. Responsible for energy coupling to the transport system. This chain is Phosphate import ATP-binding protein PstB, found in Chlorobaculum tepidum (strain ATCC 49652 / DSM 12025 / NBRC 103806 / TLS) (Chlorobium tepidum).